The following is a 767-amino-acid chain: Granule-bound starch synthase 2, chloroplastic/amyloplastic (767 aa).

A chloroplast-targeting transit peptide spans 1–45 (MENSILLHSGNQFHPNLPLLALRPKKLSLIHGSSREQMWRIKRVK). 2 disordered regions span residues 160–204 (KRDL…SSQE) and 226–268 (YMPS…EKPP). Over residues 172–188 (SRSSITASSQISSTVSS) the composition is skewed to low complexity. Residues 230–245 (LRKESSASHVEQRNEN) show a composition bias toward basic and acidic residues. Positions 253–262 (ANEETEDPVN) are enriched in acidic residues. Lys-290 contributes to the ADP-alpha-D-glucose binding site.

The protein belongs to the glycosyltransferase 1 family. Bacterial/plant glycogen synthase subfamily.

Its subcellular location is the plastid. The protein resides in the chloroplast. The protein localises to the amyloplast. It carries out the reaction [(1-&gt;4)-alpha-D-glucosyl](n) + ADP-alpha-D-glucose = [(1-&gt;4)-alpha-D-glucosyl](n+1) + ADP + H(+). It participates in glycan biosynthesis; starch biosynthesis. Functionally, accounts for only 10 to 15% of the total soluble starch synthase activity in tubers. This chain is Granule-bound starch synthase 2, chloroplastic/amyloplastic (SS2), found in Solanum tuberosum (Potato).